A 2177-amino-acid polypeptide reads, in one-letter code: Brefeldin A-inhibited guanine nucleotide-exchange protein 3 (2177 aa).

Residues 282-295 (TSSTSTSLESDSAS) show a composition bias toward low complexity. Residues 282 to 301 (TSSTSTSLESDSASPGVSDH) are disordered. Position 471 is a phosphoserine (serine 471). The span at 511–524 (TGQTTLEGELGQTT) shows a compositional bias: polar residues. Disordered regions lie at residues 511 to 542 (TGQTTLEGELGQTTPEDHSGNHKNSLKSPAIP), 617 to 636 (AAEKDSGRSDVSDIGSDNCS), and 1031 to 1076 (DGAS…LSTA). Positions 583 to 796 (RTRSYGSRYS…EELYHQVLDR (214 aa)) constitute an SEC7 domain. A compositionally biased stretch (basic and acidic residues) spans 618–627 (AEKDSGRSDV). Serine 632 and serine 636 each carry phosphoserine. Residues 1032–1047 (GASQPPLTISQPQKAT) show a composition bias toward polar residues. Position 1049 is a phosphoserine (serine 1049). A helical transmembrane segment spans residues 1492–1512 (GPGFGIYAVVHLLLPVMSVWL). Disordered stretches follow at residues 1848 to 1877 (STDSSQQCSSEDEDIFEETAQVSPPRGKEK), 1946 to 2004 (ESST…RKKE), and 2033 to 2064 (KQQHNLSAFPKEVKVEKKGEPLGPRGQDSPLL). The segment covering 1960–1974 (TPSEDDRSQSREHMG) has biased composition (basic and acidic residues). Serine 1991 carries the post-translational modification Phosphoserine. Basic and acidic residues-rich tracts occupy residues 1993–2004 (KVEKKDPSRKKE) and 2043–2052 (KEVKVEKKGE). Phosphoserine occurs at positions 2079, 2081, 2095, 2101, and 2103. The disordered stretch occupies residues 2082–2103 (AGPELLRQDKRPRSGSTGSSLS).

In terms of assembly, interacts with PHB2. In terms of tissue distribution, expressed in breast cancer cell lines. Not expressed in normal tissues such as duct, mammary gland, lung, heart, liver, kidnay, bone marrow.

The protein localises to the cytoplasm. The protein resides in the cytoplasmic vesicle. It is found in the secretory vesicle. Its subcellular location is the secretory vesicle membrane. In terms of biological role, participates in the regulation of systemic glucose homeostasis, where it negatively regulates insulin granule biogenesis in pancreatic islet beta cells. Also regulates glucagon granule production in pancreatic alpha cells. Inhibits nuclear translocation of the transcriptional coregulator PHB2 and may enhance estrogen receptor alpha (ESR1) transcriptional activity in breast cancer cells. The chain is Brefeldin A-inhibited guanine nucleotide-exchange protein 3 from Homo sapiens (Human).